Consider the following 497-residue polypeptide: Apolipoprotein N-acyltransferase (497 aa).

A run of 6 helical transmembrane segments spans residues 21 to 41 (FAPF…ALLW), 51 to 71 (ALTG…WLYV), 85 to 105 (VLAL…TGWI), 119 to 139 (GMVA…FTGF), 157 to 177 (FAPV…AAWL), and 189 to 209 (FWLG…IHWT). The CN hydrolase domain maps to 221 to 461 (LQGNIPQNMK…GLHSTAQGFG (241 aa)). Glutamate 259 serves as the catalytic Proton acceptor. The active site involves lysine 319. Cysteine 371 functions as the Nucleophile in the catalytic mechanism. Residues 472 to 492 (SLVFALIGLLLLAGSLAAFSG) traverse the membrane as a helical segment.

The protein belongs to the CN hydrolase family. Apolipoprotein N-acyltransferase subfamily.

The protein resides in the cell inner membrane. The catalysed reaction is N-terminal S-1,2-diacyl-sn-glyceryl-L-cysteinyl-[lipoprotein] + a glycerophospholipid = N-acyl-S-1,2-diacyl-sn-glyceryl-L-cysteinyl-[lipoprotein] + a 2-acyl-sn-glycero-3-phospholipid + H(+). It functions in the pathway protein modification; lipoprotein biosynthesis (N-acyl transfer). Functionally, catalyzes the phospholipid dependent N-acylation of the N-terminal cysteine of apolipoprotein, the last step in lipoprotein maturation. This chain is Apolipoprotein N-acyltransferase, found in Nitrosomonas europaea (strain ATCC 19718 / CIP 103999 / KCTC 2705 / NBRC 14298).